A 477-amino-acid polypeptide reads, in one-letter code: Protoporphyrinogen oxidase (477 aa).

FAD-binding positions include 9–14 (GGGISG), W42, 57–60 (GPRG), V257, A449, and 454–456 (VAV).

Belongs to the protoporphyrinogen/coproporphyrinogen oxidase family. Protoporphyrinogen oxidase subfamily. As to quaternary structure, monomer. Homodimer. FAD serves as cofactor.

It is found in the mitochondrion inner membrane. The enzyme catalyses protoporphyrinogen IX + 3 O2 = protoporphyrin IX + 3 H2O2. It functions in the pathway porphyrin-containing compound metabolism; protoporphyrin-IX biosynthesis; protoporphyrin-IX from protoporphyrinogen-IX: step 1/1. With respect to regulation, inhibited by acifluorfen. In terms of biological role, catalyzes the 6-electron oxidation of protoporphyrinogen-IX to form protoporphyrin-IX. This is Protoporphyrinogen oxidase (Ppox) from Mus musculus (Mouse).